The sequence spans 396 residues: Cytochrome b (396 aa).

4 consecutive transmembrane segments (helical) span residues 37–57 (FGSL…ILAM), 81–102 (WLMR…YAHI), 117–137 (WNVG…GYVL), and 182–202 (FFTF…IHIM). Residues histidine 87 and histidine 101 each contribute to the heme b site. Residues histidine 186 and histidine 200 each contribute to the heme b site. Histidine 205 is a binding site for a ubiquinone. 4 consecutive transmembrane segments (helical) span residues 230 to 250 (FKDI…SLLP), 292 to 312 (LGGV…PFTH), 324 to 344 (LAQV…WLGG), and 351 to 371 (FILM…LIFP).

This sequence belongs to the cytochrome b family. As to quaternary structure, the cytochrome bc1 complex contains 3 respiratory subunits (MT-CYB, CYC1 and UQCRFS1), 2 core proteins (UQCRC1 and UQCRC2) and probably 6 low-molecular weight proteins. It depends on heme b as a cofactor.

The protein resides in the mitochondrion inner membrane. In terms of biological role, component of the ubiquinol-cytochrome c reductase complex (complex III or cytochrome b-c1 complex) that is part of the mitochondrial respiratory chain. The b-c1 complex mediates electron transfer from ubiquinol to cytochrome c. Contributes to the generation of a proton gradient across the mitochondrial membrane that is then used for ATP synthesis. This is Cytochrome b (mt-cyb) from Lampetra fluviatilis (European river lamprey).